A 363-amino-acid chain; its full sequence is Phosphoserine aminotransferase (363 aa).

Arg42 is an L-glutamate binding site. Pyridoxal 5'-phosphate-binding positions include 76-77 (GR), Trp102, Thr156, Asp175, and Gln198. Lys199 carries the N6-(pyridoxal phosphate)lysine modification. Residue 240–241 (NT) coordinates pyridoxal 5'-phosphate.

Belongs to the class-V pyridoxal-phosphate-dependent aminotransferase family. SerC subfamily. As to quaternary structure, homodimer. Pyridoxal 5'-phosphate serves as cofactor.

The protein localises to the cytoplasm. It carries out the reaction O-phospho-L-serine + 2-oxoglutarate = 3-phosphooxypyruvate + L-glutamate. The enzyme catalyses 4-(phosphooxy)-L-threonine + 2-oxoglutarate = (R)-3-hydroxy-2-oxo-4-phosphooxybutanoate + L-glutamate. It functions in the pathway amino-acid biosynthesis; L-serine biosynthesis; L-serine from 3-phospho-D-glycerate: step 2/3. Its pathway is cofactor biosynthesis; pyridoxine 5'-phosphate biosynthesis; pyridoxine 5'-phosphate from D-erythrose 4-phosphate: step 3/5. Functionally, catalyzes the reversible conversion of 3-phosphohydroxypyruvate to phosphoserine and of 3-hydroxy-2-oxo-4-phosphonooxybutanoate to phosphohydroxythreonine. This Shewanella baltica (strain OS155 / ATCC BAA-1091) protein is Phosphoserine aminotransferase.